Reading from the N-terminus, the 154-residue chain is MTHDNKLQVEAIKRGTVIDHIPAQVGFKLLTLFKLTATDQRITIGLNLPSNHLGRKDLIKIENIFLTEEQANQLAIYAPQATVNQIDDYDVVRKLVPTLPEHITGVLTCPNSNCISRSEPVSSSFSVKQRDGDVHLKCKYCEKEFERQAVLQDR.

C109, C114, C138, and C141 together coordinate Zn(2+).

The protein belongs to the PyrI family. In terms of assembly, contains catalytic and regulatory chains. Zn(2+) is required as a cofactor.

Functionally, involved in allosteric regulation of aspartate carbamoyltransferase. This Pectobacterium carotovorum subsp. carotovorum (strain PC1) protein is Aspartate carbamoyltransferase regulatory chain.